The following is a 400-amino-acid chain: Deoxyguanosinetriphosphate triphosphohydrolase-like protein (400 aa).

In terms of domain architecture, HD spans 73–215 (RLTHSIEVSQ…AAIADDIAYN (143 aa)).

The protein belongs to the dGTPase family. Type 2 subfamily.

In Bartonella henselae (strain ATCC 49882 / DSM 28221 / CCUG 30454 / Houston 1) (Rochalimaea henselae), this protein is Deoxyguanosinetriphosphate triphosphohydrolase-like protein.